We begin with the raw amino-acid sequence, 284 residues long: 8-methylmenaquinol:fumarate reductase membrane anchor subunit (284 aa).

In terms of assembly, the MFR complex is composed of three subunits: a flavoprotein (SdhA), an iron-sulfur protein (SdhB), and one hydrophobic anchor protein (SdhE).

It is found in the periplasm. The protein resides in the cell membrane. It carries out the reaction 8-methylmenaquinone-6 + succinate = 8-methylmenaquinol-6 + fumarate. Membrane anchor subunit of 8-methylmenaquinol:fumarate reductase (MFR), that catalyzes the reduction of fumarate using 8-methylmenaquinol-6 as electron donor. The complex shows no succinate oxidation activity. Is involved in anaerobic metabolism. SdhE likely contains the quinol/quinone binding site. The protein is 8-methylmenaquinol:fumarate reductase membrane anchor subunit of Wolinella succinogenes (strain ATCC 29543 / DSM 1740 / CCUG 13145 / JCM 31913 / LMG 7466 / NCTC 11488 / FDC 602W) (Vibrio succinogenes).